The sequence spans 610 residues: UvrABC system protein C (610 aa).

Positions 16–94 (HQPGVYRMYN…IKQYLPKYNV (79 aa)) constitute a GIY-YIG domain. Residues 204-239 (QQVLKQLIEKMEVASQQLRFEDAAKFRDQIQAIRRV) form the UVR domain.

Belongs to the UvrC family. In terms of assembly, interacts with UvrB in an incision complex.

It localises to the cytoplasm. Its function is as follows. The UvrABC repair system catalyzes the recognition and processing of DNA lesions. UvrC both incises the 5' and 3' sides of the lesion. The N-terminal half is responsible for the 3' incision and the C-terminal half is responsible for the 5' incision. The sequence is that of UvrABC system protein C from Vibrio parahaemolyticus serotype O3:K6 (strain RIMD 2210633).